An 868-amino-acid polypeptide reads, in one-letter code: MLKGIHKYLLMCFGTVLFTVQANAARIMSNNPIKEDWQCKVVDGEWSCKRAKKPKSVFDKKLTKTEKEKALADDLAWVKKPSYFVGGYYSNDNQFTKALCESKKTDLSYEKSEFDNYGTLIASGNVQVLQCDQELYGNNAIINLNSNNSAIRSLVMAGDVIVKQPSTGIVIRTTELDADMNNGTYSTGEAYFRLAREMPKTRIYDKEHFSGYLRGYAKTFKKESSGDIVLSDGYITSGDPYDNAWKITGNNIDIDTNTHMAYVKNGYFEIQDIPVMYIPYFSHPIDDRRRSGFLYPGFVQNANSGIGISVPYYFNLAPNYDLMLQSVIWSQRGIIENGTFRYMTKYFQGQFEGSLVPYDFKEGKMRGSFTLSTTGQYENINTNFKYEYVSDQNYYNDFSAGNVNLVTKTLLDREFDLTYTNDYVDSGLTVLDYGVVNPLLTVDNTPYAKLPEVKLNLTSDGYTPDYLTLSAQTLNTFFYKTAGPANTNPGAPQGTNVNAFRAYESPKIAFNFNKTWGYLNPSLEVPIRYYQLKNSPTDTIQFANSSVTSVLPIFNIDAGAYFDKDYTNENGTYTSTLHPRLFYTYIPYQDQTNIPLFDTSLQNEQYMQMFQVNRFTGYDRINNANQLTYAIEASTTNQDNGTTLASAKIGQMAYFADRKVNLCQGNSACPNPGLMDPFSTDTFSPIMSSFEFQVMKNIYLSAQVNYRVNQQNVDYQVYQLSYKDENENIFNVSYNNIANNWNSLTQQQIAEGAKPQPQETITLSTVLNITDHWGIAALWNYNFQQKQIANIFAGLQYNAKSWAVRALWQKTAYTNQDPNNPTLLGPLVNTYMFEFELKGLGGIGNTSDISSRLQQINGYQVGEWGNGI.

A signal peptide spans 1–24; sequence MLKGIHKYLLMCFGTVLFTVQANA.

The protein belongs to the LptD family. In terms of assembly, component of the lipopolysaccharide transport and assembly complex. Interacts with LptE and LptA.

It is found in the cell outer membrane. Its function is as follows. Together with LptE, is involved in the assembly of lipopolysaccharide (LPS) at the surface of the outer membrane. This Francisella tularensis subsp. tularensis (strain FSC 198) protein is LPS-assembly protein LptD.